The following is a 923-amino-acid chain: Carnitine O-acetyltransferase YAT2 (923 aa).

Positions 1-11 (MSSGSTIVSSD) are enriched in polar residues. 2 disordered regions span residues 1–21 (MSSGSTIVSSDKSGRTFKHEE) and 197–232 (NKPYTASDLEDPDYSSDEDDNDEPTQKDFDDRKRKH). Serine 2 bears the N-acetylserine mark. Over residues 12–21 (KSGRTFKHEE) the composition is skewed to basic and acidic residues. Residues 204 to 219 (DLEDPDYSSDEDDNDE) are compositionally biased toward acidic residues. Positions 220-232 (PTQKDFDDRKRKH) are enriched in basic and acidic residues. CoA-binding positions include 529 to 541 (GRRSAQRLGVKPD) and serine 567. Serine 576 is a (R)-carnitine binding site. A disordered region spans residues 763–787 (NAVNNPPKRNGHTVNGSRKTSSSSQ). The segment covering 774 to 787 (HTVNGSRKTSSSSQ) has biased composition (polar residues). A Phosphoserine modification is found at serine 783.

Belongs to the carnitine/choline acetyltransferase family.

The protein localises to the cytoplasm. The catalysed reaction is (R)-carnitine + acetyl-CoA = O-acetyl-(R)-carnitine + CoA. Functionally, carnitine O-acetyltransferase involved in the shutteling of acetyl-CoA in the cell. This chain is Carnitine O-acetyltransferase YAT2, found in Saccharomyces cerevisiae (strain ATCC 204508 / S288c) (Baker's yeast).